Here is a 429-residue protein sequence, read N- to C-terminus: Phosphoribosylamine--glycine ligase (429 aa).

An ATP-grasp domain is found at 109–316 (KDFLARHQIP…LVELCLAAID (208 aa)). Position 135 to 196 (135 to 196 (VREQGAPIVV…EEFLDGEEAS (62 aa))) interacts with ATP. A disordered region spans residues 212 to 234 (SQDHKRVGDKDTGPNTGGMGAYS). Positions 213–223 (QDHKRVGDKDT) are enriched in basic and acidic residues. Mg(2+)-binding residues include Glu-286 and Asn-288.

Belongs to the GARS family. Mg(2+) is required as a cofactor. Mn(2+) serves as cofactor.

It carries out the reaction 5-phospho-beta-D-ribosylamine + glycine + ATP = N(1)-(5-phospho-beta-D-ribosyl)glycinamide + ADP + phosphate + H(+). It functions in the pathway purine metabolism; IMP biosynthesis via de novo pathway; N(1)-(5-phospho-D-ribosyl)glycinamide from 5-phospho-alpha-D-ribose 1-diphosphate: step 2/2. The sequence is that of Phosphoribosylamine--glycine ligase from Vibrio vulnificus (strain CMCP6).